The sequence spans 794 residues: 6-hydroxypseudooxynicotine dehydrogenase complex subunit gamma (794 aa).

As to quaternary structure, heterohexamer of 2 alpha (kdhA), 2 beta (kdhB) and 2 gamma (kdhC) subunit. Dimer of heterotrimers. Requires Mo-molybdopterin cytosine dinucleotide as cofactor.

It carries out the reaction 6-hydroxypseudooxynicotine + A + H2O = 2,6-dihydroxypseudooxynicotine + AH2. It participates in alkaloid degradation; nicotine degradation. In terms of biological role, molybdo-flavoprotein enzyme complex involved in nicotine degradation. The subunit gamma (large subunit) contains the substrate-binding sites, the subunit alpha (medium subunit) binds FAD and the subunit beta (small subunit) has a 2Fe-2S ferredoxin-type domain which binds 2 2Fe-2S clusters. The protein is 6-hydroxypseudooxynicotine dehydrogenase complex subunit gamma (kdhC) of Paenarthrobacter nicotinovorans (Arthrobacter nicotinovorans).